The following is a 375-amino-acid chain: Putative serine protease 47 (375 aa).

A signal peptide spans 1 to 23 (MGYCQGVSQVAVVLLMFPKEKEA). A disordered region spans residues 41-60 (DGQLPMGPHSRASQVAPETT). Polar residues predominate over residues 51–60 (RASQVAPETT). The region spanning 81-323 (IYGGRDAAAG…FINWIDEIMR (243 aa)) is the Peptidase S1 domain. Cys-106 and Cys-122 are disulfide-bonded. Catalysis depends on charge relay system residues His-121 and Asp-172. 2 N-linked (GlcNAc...) asparagine glycosylation sites follow: Asn-183 and Asn-203. Cysteines 206 and 281 form a disulfide. The active-site Charge relay system is Ser-275.

The protein belongs to the peptidase S1 family.

The protein resides in the secreted. This chain is Putative serine protease 47 (PRSS47P), found in Homo sapiens (Human).